The sequence spans 606 residues: MSHTASSCQELVENCAVHVAGMAQEDSRRGQVPSSFYHGANQELDLSTKVYKRESGSPYSVLVDTKMSKPHLHETEEQPYFRETRAVSDVHAVKEDRENSDDTEEEEEEVSYKREQIIVEVNLNNQTLNVSKGEKGVSSQSKETPVLKTSSEEEEEESEEEATDDSNDYGENEKQKKKEKIVEKVSVTQRRTRRAASVAAATTSPTPRTTRGRRKSVEPPKRKKRATKEPKAPVQKAKCEEKETLTCEKCPRVFNTRWYLEKHMNVTHRRMQICDKCGKKFVLESELSLHQQTDCEKNIQCVSCNKSFKKLWSLHEHIKIVHGYAEKKFSCEICEKKFYTMAHVRKHMVAHTKDMPFTCETCGKSFKRSMSLKVHSLQHSGEKPFRCENCDERFQYKYQLRSHMSIHIGHKQFMCQWCGKDFNMKQYFDEHMKTHTGEKPFICEICGKSFTSRPNMKRHRRTHTGEKPYPCDVCGQRFRFSNMLKAHKEKCFRVTSPVNVPPAVQIPLTTSPATPVPSVVNTATTPTPPINMNPVSTLPPRPIPHPFSHLHIHPHPHHPHHLPIPPVPHLPPPPALFKSEPLNHRGQSEDNFLRHLAEKNSSAQHH.

The residue at position 57 (S57) is a Phosphoserine. Basic and acidic residues predominate over residues 71 to 97; the sequence is HLHETEEQPYFRETRAVSDVHAVKEDR. 2 disordered regions span residues 71-113 and 130-235; these read HLHE…VSYK and VSKG…APVQ. Residues 98-109 are compositionally biased toward acidic residues; it reads ENSDDTEEEEEE. The residue at position 100 (S100) is a Phosphoserine. T103 is subject to Phosphothreonine. Polar residues predominate over residues 137 to 149; it reads VSSQSKETPVLKT. A compositionally biased stretch (acidic residues) spans 152 to 170; that stretch reads EEEEEESEEEATDDSNDYG. Residues 171–183 show a composition bias toward basic and acidic residues; sequence ENEKQKKKEKIVE. Positions 184 to 209 are enriched in low complexity; sequence KVSVTQRRTRRAASVAAATTSPTPRT. A phosphoserine mark is found at S197 and S204. A C2H2-type 1 zinc finger spans residues 245-268; the sequence is LTCEKCPRVFNTRWYLEKHMNVTH. Residues 272 to 294 form a C2H2-type 2; degenerate zinc finger; it reads QICDKCGKKFVLESELSLHQQTD. C2H2-type zinc fingers lie at residues 299 to 322, 329 to 351, 357 to 379, 385 to 407, 413 to 435, and 441 to 463; these read IQCV…KIVH, FSCE…MVAH, FTCE…SLQH, FRCE…MSIH, FMCQ…MKTH, and FICE…RRTH. The C2H2-type 9; degenerate zinc-finger motif lies at 469–492; the sequence is YPCDVCGQRFRFSNMLKAHKEKCF. Residues 498–606 form a mediates interaction with CBFA2T3 region; that stretch reads VNVPPAVQIP…AEKNSSAQHH (109 aa).

Belongs to the krueppel C2H2-type zinc-finger protein family. Interacts with CBFA2T3. Widely expressed with higher expression in breast, prostate, vulva and pancreas.

Its subcellular location is the nucleus. Functions as a transcriptional repressor. The polypeptide is Zinc finger protein 652 (ZNF652) (Homo sapiens (Human)).